Here is a 218-residue protein sequence, read N- to C-terminus: Glycerol-3-phosphate acyltransferase 2 (218 aa).

Helical transmembrane passes span 6-26, 50-70, 85-105, 115-135, and 159-179; these read YLLIFILAYLIGSFPTGVLVG, VMGPVAGSAVLVIDVLKGTLA, LLLIAGACAILGHTFSIFLKF, AGVFLGYNLKFFGLCALVFLP, and FWFHDIFLTIITGIMMILLFV.

It belongs to the PlsY family. In terms of assembly, probably interacts with PlsX.

It localises to the cell membrane. It carries out the reaction an acyl phosphate + sn-glycerol 3-phosphate = a 1-acyl-sn-glycero-3-phosphate + phosphate. Its pathway is lipid metabolism; phospholipid metabolism. In terms of biological role, catalyzes the transfer of an acyl group from acyl-phosphate (acyl-PO(4)) to glycerol-3-phosphate (G3P) to form lysophosphatidic acid (LPA). This enzyme utilizes acyl-phosphate as fatty acyl donor, but not acyl-CoA or acyl-ACP. The sequence is that of Glycerol-3-phosphate acyltransferase 2 from Lactobacillus johnsonii (strain CNCM I-12250 / La1 / NCC 533).